A 609-amino-acid chain; its full sequence is Numb-like protein (609 aa).

5 disordered regions span residues 1–68 (MSRS…QWQA), 223–283 (GSFR…PVAA), 372–421 (ASAG…EEVS), 434–464 (QQQQ…QPFP), and 537–609 (AGAF…EIEL). A compositionally biased stretch (pro residues) spans 19–29 (PPAPCGAPGPP). The region spanning 74–223 (RKGTCSFPVR…ASRTSFAREG (150 aa)) is the PID domain. A phosphoserine mark is found at Ser224 and Ser228. Positions 233 to 245 (PAEREAPDKKKAE) are enriched in basic and acidic residues. Positions 246–259 (AAAAPTVAPGPAQP) are enriched in low complexity. Ser263 carries the phosphoserine modification. At Thr279 the chain carries Phosphothreonine. The segment covering 409–418 (TPSEAERWLE) has biased composition (basic and acidic residues). A Phosphoserine modification is found at Ser411. Residues 434–446 (QQQQQQQQQQQQQ) are compositionally biased toward low complexity. 2 stretches are compositionally biased toward pro residues: residues 454-464 (PTMPPALQPFP) and 558-573 (NGAP…PAPE).

In terms of assembly, interacts (via PTB domain) with MAP3K7IP2 (via C-terminal). Interacts (via C-terminal) with TRAF6 (via TRAF domains). Associates with EPS15 and NOTCH1.

It is found in the cytoplasm. Functionally, plays a role in the process of neurogenesis. Required throughout embryonic neurogenesis to maintain neural progenitor cells, also called radial glial cells (RGCs), by allowing their daughter cells to choose progenitor over neuronal cell fate. Not required for the proliferation of neural progenitor cells before the onset of embryonic neurogenesis. Also required postnatally in the subventricular zone (SVZ) neurogenesis by regulating SVZ neuroblasts survival and ependymal wall integrity. Negative regulator of NF-kappa-B signaling pathway. The inhibition of NF-kappa-B activation is mediated at least in part, by preventing MAP3K7IP2 to interact with polyubiquitin chains of TRAF6 and RIPK1 and by stimulating the 'Lys-48'-linked polyubiquitination and degradation of TRAF6 in cortical neurons. In Homo sapiens (Human), this protein is Numb-like protein (NUMBL).